The primary structure comprises 323 residues: Porphobilinogen deaminase (323 aa).

S-(dipyrrolylmethanemethyl)cysteine is present on C240.

This sequence belongs to the HMBS family. Monomer. Dipyrromethane serves as cofactor.

The enzyme catalyses 4 porphobilinogen + H2O = hydroxymethylbilane + 4 NH4(+). The protein operates within porphyrin-containing compound metabolism; protoporphyrin-IX biosynthesis; coproporphyrinogen-III from 5-aminolevulinate: step 2/4. Its function is as follows. Tetrapolymerization of the monopyrrole PBG into the hydroxymethylbilane pre-uroporphyrinogen in several discrete steps. The chain is Porphobilinogen deaminase from Sulfurovum sp. (strain NBC37-1).